We begin with the raw amino-acid sequence, 842 residues long: Protein translocase subunit SecA 1 (842 aa).

ATP-binding positions include Gln85, 103 to 107 (GEGKT), and Asp493. 4 residues coordinate Zn(2+): Cys824, Cys826, Cys835, and His836.

It belongs to the SecA family. Monomer and homodimer. Part of the essential Sec protein translocation apparatus which comprises SecA, SecYEG and auxiliary proteins SecDF. Other proteins may also be involved. The cofactor is Zn(2+).

Its subcellular location is the cell membrane. The protein resides in the cytoplasm. The enzyme catalyses ATP + H2O + cellular proteinSide 1 = ADP + phosphate + cellular proteinSide 2.. Part of the Sec protein translocase complex. Interacts with the SecYEG preprotein conducting channel. Has a central role in coupling the hydrolysis of ATP to the transfer of proteins into and across the cell membrane, serving as an ATP-driven molecular motor driving the stepwise translocation of polypeptide chains across the membrane. The sequence is that of Protein translocase subunit SecA 1 from Streptococcus agalactiae serotype Ia (strain ATCC 27591 / A909 / CDC SS700).